The following is a 347-amino-acid chain: Nicotinate-nucleotide--dimethylbenzimidazole phosphoribosyltransferase (347 aa).

Glutamate 316 serves as the catalytic Proton acceptor.

It belongs to the CobT family.

The enzyme catalyses 5,6-dimethylbenzimidazole + nicotinate beta-D-ribonucleotide = alpha-ribazole 5'-phosphate + nicotinate + H(+). It participates in nucleoside biosynthesis; alpha-ribazole biosynthesis; alpha-ribazole from 5,6-dimethylbenzimidazole: step 1/2. Its function is as follows. Catalyzes the synthesis of alpha-ribazole-5'-phosphate from nicotinate mononucleotide (NAMN) and 5,6-dimethylbenzimidazole (DMB). The chain is Nicotinate-nucleotide--dimethylbenzimidazole phosphoribosyltransferase from Vibrio campbellii (strain ATCC BAA-1116).